The chain runs to 284 residues: Pantothenate synthetase (284 aa).

An ATP-binding site is contributed by methionine 30–histidine 37. Residue histidine 37 is the Proton donor of the active site. Glutamine 61 lines the (R)-pantoate pocket. Glutamine 61 lines the beta-alanine pocket. Glycine 149–aspartate 152 contributes to the ATP binding site. A (R)-pantoate-binding site is contributed by glutamine 155. ATP-binding positions include isoleucine 178 and leucine 186 to arginine 189.

It belongs to the pantothenate synthetase family. In terms of assembly, homodimer.

It is found in the cytoplasm. It carries out the reaction (R)-pantoate + beta-alanine + ATP = (R)-pantothenate + AMP + diphosphate + H(+). The protein operates within cofactor biosynthesis; (R)-pantothenate biosynthesis; (R)-pantothenate from (R)-pantoate and beta-alanine: step 1/1. Catalyzes the condensation of pantoate with beta-alanine in an ATP-dependent reaction via a pantoyl-adenylate intermediate. The sequence is that of Pantothenate synthetase from Salmonella choleraesuis (strain SC-B67).